The following is a 173-amino-acid chain: Photosystem I assembly protein Ycf3 (173 aa).

TPR repeat units lie at residues alanine 35–proline 68, serine 72–leucine 105, and glycine 120–asparagine 153.

It belongs to the Ycf3 family.

The protein localises to the plastid. Its subcellular location is the chloroplast thylakoid membrane. Essential for the assembly of the photosystem I (PSI) complex. May act as a chaperone-like factor to guide the assembly of the PSI subunits. The sequence is that of Photosystem I assembly protein Ycf3 from Cyanidium caldarium (Red alga).